We begin with the raw amino-acid sequence, 144 residues long: Large ribosomal subunit protein uL15 (144 aa).

Residues 1 to 54 are disordered; that stretch reads MRLNTLSPAPGRVSAKKRVGRGIGSGLGKTAGRGHKGLKSRSGGSVKPGFEGGQ. Residues 21–31 are compositionally biased toward gly residues; that stretch reads RGIGSGLGKTA.

This sequence belongs to the universal ribosomal protein uL15 family. As to quaternary structure, part of the 50S ribosomal subunit.

Functionally, binds to the 23S rRNA. The sequence is that of Large ribosomal subunit protein uL15 from Saccharophagus degradans (strain 2-40 / ATCC 43961 / DSM 17024).